A 545-amino-acid polypeptide reads, in one-letter code: Autoimmune regulator (545 aa).

The 105-residue stretch at 1 to 105 (MATDAALRRL…ILDSFPKDVD (105 aa)) folds into the HSR domain. 2 short sequence motifs (LXXLL motif) span residues 7-11 (LRRLL) and 63-67 (LSWLL). Disordered regions lie at residues 101 to 178 (PKDV…LPLG) and 234 to 290 (SKFE…SDPQ). A compositionally biased stretch (pro residues) spans 116 to 128 (PAVPKALVPPPRL). The span at 140–152 (AAAPAALTPRGTA) shows a compositional bias: low complexity. Positions 181–280 (IQTMSASVQR…ARLGQQGSVP (100 aa)) constitute an SAND domain. Interaction with histone H3 not methylated at 'Lys-4' regions lie at residues 295 to 298 (NEDE), 304 to 312 (DGGELICCD), and 331 to 335 (PSGTW). The PHD-type 1 zinc finger occupies 296-343 (EDECAVCRDGGELICCDGCPRAFHLACLSPPLREIPSGTWRCSSCLQA). Positions 348 to 382 (VQPRAEEPRPQEPPVETPLPPGLRSAGEEVRGPPG) are disordered. A compositionally biased stretch (pro residues) spans 358–368 (QEPPVETPLPP). Positions 414–418 (LHPLL) match the LXXLL motif 3 motif. Residues 434 to 475 (CGVCGDGTDVLRCTHCAAAFHWRCHFPAGTSRPGTGLRCRSC) form a PHD-type 2 zinc finger. The interval 489–508 (APSPARLAPGPAKDDTASHE) is disordered. An LXXLL motif 4 motif is present at residues 516-520 (LESLL).

As to quaternary structure, homodimer and homotetramer. Interacts with CREBBP. Interacts preferentially with histone H3 that is not methylated at 'Lys-4'. Binds with lower affinity to histone H3 that is monomethylated at 'Lys-4'. Trimethylation of histone H3 at 'Lys-4' or phosphorylation at 'Thr-3' abolish the interaction. Binds with lower affinity to histone H3 that is acetylated at 'Lys-4', or that is acetylated at 'Lys-9' or trimethylated at 'Lys-9'. Binds histone H3 that is dimethylated at 'Arg-2' with very low affinity. In terms of processing, phosphorylated. Phosphorylation could trigger oligomerization. In terms of tissue distribution, widely expressed. Expressed at higher level in thymus (medullary epithelial cells and monocyte-dendritic cells), pancreas, adrenal cortex and testis. Expressed at lower level in the spleen, fetal liver and lymph nodes. In secondary lymphoid organs, expressed in a discrete population of bone marrow-derived toleregenic antigen presenting cells (APCs) called extrathymic AIRE expressing cells (eTAC)(at protein level). Isoform 2 and isoform 3 seem to be less frequently expressed than isoform 1, if at all.

The protein localises to the nucleus. The protein resides in the cytoplasm. Transcription factor playing an essential role to promote self-tolerance in the thymus by regulating the expression of a wide array of self-antigens that have the commonality of being tissue-restricted in their expression pattern in the periphery, called tissue restricted antigens (TRA). Binds to G-doublets in an A/T-rich environment; the preferred motif is a tandem repeat of 5'-ATTGGTTA-3' combined with a 5'-TTATTA-3' box. Binds to nucleosomes. Binds to chromatin and interacts selectively with histone H3 that is not methylated at 'Lys-4', not phosphorylated at 'Thr-3' and not methylated at 'Arg-2'. Functions as a sensor of histone H3 modifications that are important for the epigenetic regulation of gene expression. Mainly expressed by medullary thymic epithelial cells (mTECs), induces the expression of thousands of tissue-restricted proteins, which are presented on major histocompatibility complex class I (MHC-I) and MHC-II molecules to developing T-cells percolating through the thymic medulla. Also induces self-tolerance through other mechanisms such as the regulation of the mTEC differentiation program. Controls the medullary accumulation of thymic dendritic cells and the development of regulatory T-cell through the regulation of XCL1 expression. Regulates the production of CCR4 and CCR7 ligands in medullary thymic epithelial cells and alters the coordinated maturation and migration of thymocytes. In thimic B-cells, allows the presentation of licensing-dependent endogenous self-anitgen for negative selection. In secondary lymphoid organs, induces functional inactivation of CD4(+) T-cells. Expressed by a distinct bone marrow-derived population, induces self-tolerance through a mechanism that does not require regulatory T-cells and is resitant to innate inflammatory stimuli. This is Autoimmune regulator (AIRE) from Homo sapiens (Human).